We begin with the raw amino-acid sequence, 187 residues long: Large ribosomal subunit protein uL6 (187 aa).

The protein belongs to the universal ribosomal protein uL6 family. Part of the 50S ribosomal subunit.

In terms of biological role, this protein binds to the 23S rRNA, and is important in its secondary structure. It is located near the subunit interface in the base of the L7/L12 stalk, and near the tRNA binding site of the peptidyltransferase center. The sequence is that of Large ribosomal subunit protein uL6 from Thermosynechococcus vestitus (strain NIES-2133 / IAM M-273 / BP-1).